We begin with the raw amino-acid sequence, 769 residues long: Neprilysin-21 (769 aa).

The Cytoplasmic portion of the chain corresponds to 1 to 26; the sequence is MKPENGAATWHPAKRSCLGRLTTLET. Residues 27-47 form a helical; Signal-anchor for type II membrane protein membrane-spanning segment; it reads LLLVFLGLLITALLSVLFLWL. At 48 to 769 the chain is on the extracellular side; that stretch reads WVLDGYKTFT…MNPERKCQVW (722 aa). Asn69 is a glycosylation site (N-linked (GlcNAc...) asparagine). Residues 85–769 enclose the Peptidase M13 domain; it reads VCTSRECVRL…MNPERKCQVW (685 aa). Disulfide bonds link Cys86–Cys91, Cys109–Cys754, Cys117–Cys714, Cys173–Cys428, and Cys638–Cys766. 7 N-linked (GlcNAc...) asparagine glycosylation sites follow: Asn221, Asn240, Asn272, Asn307, Asn356, Asn412, and Asn506. His601 provides a ligand contact to Zn(2+). The active site involves Glu602. His605 and Glu663 together coordinate Zn(2+). The active-site Proton donor is the Asp667. N-linked (GlcNAc...) asparagine glycans are attached at residues Asn684 and Asn698.

This sequence belongs to the peptidase M13 family. Zn(2+) serves as cofactor.

It is found in the cell membrane. In terms of biological role, probable cell surface protease. This is Neprilysin-21 (nep-21) from Caenorhabditis elegans.